A 507-amino-acid chain; its full sequence is ATP synthase subunit alpha (507 aa).

Residue 168 to 175 (GDRQTGKT) coordinates ATP.

It belongs to the ATPase alpha/beta chains family. F-type ATPases have 2 components, CF(1) - the catalytic core - and CF(0) - the membrane proton channel. CF(1) has five subunits: alpha(3), beta(3), gamma(1), delta(1), epsilon(1). CF(0) has three main subunits: a(1), b(2) and c(9-12). The alpha and beta chains form an alternating ring which encloses part of the gamma chain. CF(1) is attached to CF(0) by a central stalk formed by the gamma and epsilon chains, while a peripheral stalk is formed by the delta and b chains.

Its subcellular location is the cell membrane. It catalyses the reaction ATP + H2O + 4 H(+)(in) = ADP + phosphate + 5 H(+)(out). In terms of biological role, produces ATP from ADP in the presence of a proton gradient across the membrane. The alpha chain is a regulatory subunit. The protein is ATP synthase subunit alpha of Mesomycoplasma hyopneumoniae (strain 232) (Mycoplasma hyopneumoniae).